The primary structure comprises 447 residues: Adenylosuccinate synthetase (447 aa).

Residues 12 to 18 (GDEGKGK) and 40 to 42 (GHT) each bind GTP. The active-site Proton acceptor is the Asp13. Residues Asp13 and Gly40 each coordinate Mg(2+). IMP contacts are provided by residues 13–16 (DEGK), 38–41 (NAGH), Thr128, Arg142, Gln223, Thr238, and Arg302. His41 (proton donor) is an active-site residue. 298-304 (TTTGRKR) contributes to the substrate binding site. Residues Arg304, 330–332 (KLD), and 412–414 (SLG) each bind GTP.

Belongs to the adenylosuccinate synthetase family. As to quaternary structure, homodimer. Requires Mg(2+) as cofactor.

The protein localises to the cytoplasm. It catalyses the reaction IMP + L-aspartate + GTP = N(6)-(1,2-dicarboxyethyl)-AMP + GDP + phosphate + 2 H(+). Its pathway is purine metabolism; AMP biosynthesis via de novo pathway; AMP from IMP: step 1/2. Plays an important role in the de novo pathway of purine nucleotide biosynthesis. Catalyzes the first committed step in the biosynthesis of AMP from IMP. The polypeptide is Adenylosuccinate synthetase (Nostoc punctiforme (strain ATCC 29133 / PCC 73102)).